The sequence spans 87 residues: NAD(P)H-quinone oxidoreductase subunit O (87 aa).

Over residues 1–10 the composition is skewed to basic and acidic residues; it reads MSEQTGKVDD. Residues 1-26 are disordered; it reads MSEQTGKVDDSQSPPKVQKKLRKGDL.

This sequence belongs to the complex I NdhO subunit family. NDH-1 can be composed of about 15 different subunits; different subcomplexes with different compositions have been identified which probably have different functions.

It is found in the cellular thylakoid membrane. It catalyses the reaction a plastoquinone + NADH + (n+1) H(+)(in) = a plastoquinol + NAD(+) + n H(+)(out). The catalysed reaction is a plastoquinone + NADPH + (n+1) H(+)(in) = a plastoquinol + NADP(+) + n H(+)(out). Functionally, NDH-1 shuttles electrons from an unknown electron donor, via FMN and iron-sulfur (Fe-S) centers, to quinones in the respiratory and/or the photosynthetic chain. The immediate electron acceptor for the enzyme in this species is believed to be plastoquinone. Couples the redox reaction to proton translocation, and thus conserves the redox energy in a proton gradient. Cyanobacterial NDH-1 also plays a role in inorganic carbon-concentration. The protein is NAD(P)H-quinone oxidoreductase subunit O of Prochlorococcus marinus (strain NATL1A).